A 545-amino-acid polypeptide reads, in one-letter code: Sphingomyelin phosphodiesterase 5 (545 aa).

Residues 1-35 (MSLRESPFPNGFLEGLHAVGWGLIFPCFWFLDRLI) constitute a mitochondrion transit peptide. Residues 36–64 (AVCISTTLERMWRLEQECYLHPLKVVFGS) lie on the Mitochondrial matrix side of the membrane. A helical; Signal-anchor for type II membrane protein membrane pass occupies residues 65-85 (ILFFILFVISTPFALLGFILW). Over 86–545 (APLQAIRRPF…LSVSLDSEQN (460 aa)) the chain is Mitochondrial intermembrane. Mg(2+) is bound at residue Glu258. The active-site Proton acceptor is the His529.

Belongs to the neutral sphingomyelinase family. Mg(2+) is required as a cofactor. Requires Mn(2+) as cofactor.

The protein localises to the mitochondrion inner membrane. Its subcellular location is the endoplasmic reticulum membrane. It catalyses the reaction a sphingomyelin + H2O = phosphocholine + an N-acylsphing-4-enine + H(+). It carries out the reaction N-(hexadecanoyl)-sphing-4-enine-1-phosphocholine + H2O = N-hexadecanoylsphing-4-enine + phosphocholine + H(+). It functions in the pathway lipid metabolism; sphingolipid metabolism. With respect to regulation, activated by the phospholipids cardiolipin, phosphatidylserine, and phosphatidylethanolamine. Strongest activation with cardiolipin. Functionally, catalyzes the hydrolysis of membrane sphingomyelin to form phosphorylcholine and ceramide. The protein is Sphingomyelin phosphodiesterase 5 of Danio rerio (Zebrafish).